The following is a 448-amino-acid chain: MSQAETTKLPYKVKDISLADYGRKEIELAENEMPGLMALRSKYGAEKPLKGARIAGCLHMTIQTAVLIETLVELGAEVTWSSCNIFSTQDHAAAAIAAAGIPVYAWKGMTEEEFDWCIEQTLDFPSGEKLNMILDDGGDLTAMVHDRFPELLDNIYGISEETTAGVHRLEVLNKSGKLRVPSINVNDSATKSKFDNLYGCRESLADGVKRATDVMLAGKVAVVCGYGDVGKGCAHSLKSYGCRVLVTEIDPINALQAAMEGFEVTTMEEACKEGRLYVTTTGNKDIILGEHMKQMPNDAILCNIGHFDTEIDIAWAEQQVADGKATVSEIKPSDIGAVDRFTFNDTGRSIIILAKGRLVNLGCATGHPSFVMSSSFTNQVLAQMELYQNRDNDKYGVQVYLLPKELDEEVARLHLEAIGVKLTKLTQEQADYIGVPVEGPYKPNHYRY.

The substrate site is built by T61, D136, and E161. Position 162-164 (162-164 (TTA)) interacts with NAD(+). Positions 191 and 195 each coordinate substrate. NAD(+)-binding positions include N196, 225 to 230 (GYGDVG), E248, N283, 304 to 306 (IGH), and N360.

Belongs to the adenosylhomocysteinase family. NAD(+) serves as cofactor.

The protein localises to the cytoplasm. It catalyses the reaction S-adenosyl-L-homocysteine + H2O = L-homocysteine + adenosine. The protein operates within amino-acid biosynthesis; L-homocysteine biosynthesis; L-homocysteine from S-adenosyl-L-homocysteine: step 1/1. Functionally, may play a key role in the regulation of the intracellular concentration of adenosylhomocysteine. This Rhodopirellula baltica (strain DSM 10527 / NCIMB 13988 / SH1) protein is Adenosylhomocysteinase.